Consider the following 443-residue polypeptide: Glucose-6-phosphate isomerase (443 aa).

Glu-285 functions as the Proton donor in the catalytic mechanism. Active-site residues include His-306 and Lys-420.

It belongs to the GPI family.

The protein localises to the cytoplasm. It catalyses the reaction alpha-D-glucose 6-phosphate = beta-D-fructose 6-phosphate. It functions in the pathway carbohydrate biosynthesis; gluconeogenesis. Its pathway is carbohydrate degradation; glycolysis; D-glyceraldehyde 3-phosphate and glycerone phosphate from D-glucose: step 2/4. Its function is as follows. Catalyzes the reversible isomerization of glucose-6-phosphate to fructose-6-phosphate. The chain is Glucose-6-phosphate isomerase from Staphylococcus saprophyticus subsp. saprophyticus (strain ATCC 15305 / DSM 20229 / NCIMB 8711 / NCTC 7292 / S-41).